The following is a 621-amino-acid chain: 1-deoxy-D-xylulose-5-phosphate synthase (621 aa).

Thiamine diphosphate-binding positions include histidine 76 and 117–119; that span reads AHS. Position 148 (aspartate 148) interacts with Mg(2+). Residues 149-150, asparagine 178, tyrosine 285, and glutamate 367 contribute to the thiamine diphosphate site; that span reads GA. Asparagine 178 is a Mg(2+) binding site.

The protein belongs to the transketolase family. DXPS subfamily. As to quaternary structure, homodimer. Mg(2+) is required as a cofactor. Thiamine diphosphate serves as cofactor.

It carries out the reaction D-glyceraldehyde 3-phosphate + pyruvate + H(+) = 1-deoxy-D-xylulose 5-phosphate + CO2. It participates in metabolic intermediate biosynthesis; 1-deoxy-D-xylulose 5-phosphate biosynthesis; 1-deoxy-D-xylulose 5-phosphate from D-glyceraldehyde 3-phosphate and pyruvate: step 1/1. Catalyzes the acyloin condensation reaction between C atoms 2 and 3 of pyruvate and glyceraldehyde 3-phosphate to yield 1-deoxy-D-xylulose-5-phosphate (DXP). In Aromatoleum aromaticum (strain DSM 19018 / LMG 30748 / EbN1) (Azoarcus sp. (strain EbN1)), this protein is 1-deoxy-D-xylulose-5-phosphate synthase.